The chain runs to 496 residues: Beta-N-acetylhexosaminidase (496 aa).

Residue E298 is the Proton donor of the active site.

It belongs to the glycosyl hydrolase 20 family.

The enzyme catalyses Hydrolysis of terminal non-reducing N-acetyl-D-hexosamine residues in N-acetyl-beta-D-hexosaminides.. It functions in the pathway glycan degradation; chitin degradation. In terms of biological role, catalyzes the cleavage of beta-N-acetylglucosaminides and beta-N-acetylgalactosaminides. Also catalyzes the hydrolysis of N-acetylchitooligomers. May be involved in chitin degradation. It is not able to cleave beta-glucosides. In Cellulomonas fimi, this protein is Beta-N-acetylhexosaminidase (hex20).